A 188-amino-acid chain; its full sequence is Peptidyl-tRNA hydrolase (188 aa).

Phe15 serves as a coordination point for tRNA. The Proton acceptor role is filled by His20. Positions 64, 66, and 112 each coordinate tRNA.

The protein belongs to the PTH family. As to quaternary structure, monomer.

Its subcellular location is the cytoplasm. It catalyses the reaction an N-acyl-L-alpha-aminoacyl-tRNA + H2O = an N-acyl-L-amino acid + a tRNA + H(+). In terms of biological role, hydrolyzes ribosome-free peptidyl-tRNAs (with 1 or more amino acids incorporated), which drop off the ribosome during protein synthesis, or as a result of ribosome stalling. Catalyzes the release of premature peptidyl moieties from peptidyl-tRNA molecules trapped in stalled 50S ribosomal subunits, and thus maintains levels of free tRNAs and 50S ribosomes. This is Peptidyl-tRNA hydrolase from Borreliella afzelii (strain PKo) (Borrelia afzelii).